A 142-amino-acid chain; its full sequence is Hemoglobin subunit alpha-1/2 (142 aa).

Residues 2–142 form the Globin domain; sequence VLSPADKTNI…VSTVLTSKYR (141 aa). Position 4 is a phosphoserine (S4). K8 is modified (N6-succinyllysine). Position 9 is a phosphothreonine (T9). Residue K12 is modified to N6-succinyllysine. K17 bears the N6-acetyllysine; alternate mark. An N6-succinyllysine; alternate modification is found at K17. A Phosphotyrosine modification is found at Y25. K41 is modified (N6-succinyllysine). H59 contributes to the O2 binding site. Residue H88 participates in heme b binding. S103 is subject to Phosphoserine. T109 is subject to Phosphothreonine. S125 bears the Phosphoserine mark. T135 and T138 each carry phosphothreonine. At S139 the chain carries Phosphoserine.

Belongs to the globin family. As to quaternary structure, heterotetramer of two alpha chains and two beta chains. Red blood cells.

Functionally, involved in oxygen transport from the lung to the various peripheral tissues. This Oryctolagus cuniculus (Rabbit) protein is Hemoglobin subunit alpha-1/2.